We begin with the raw amino-acid sequence, 348 residues long: Chaperone protein DnaJ (348 aa).

The 63-residue stretch at 3–65 folds into the J domain; that stretch reads DLYGILGVDH…EQRQRYDRHV (63 aa). A CR-type zinc finger spans residues 109–191; the sequence is GGSQVVKIDS…CYGNGSRSAP (83 aa). Positions 122, 125, 139, 142, 165, 168, 179, and 182 each coordinate Zn(2+). CXXCXGXG motif repeat units follow at residues 122-129, 139-146, 165-172, and 179-186; these read CDVCNGTR, CFDCNGSG, CSKCRGNG, and CRRCYGNG.

It belongs to the DnaJ family. In terms of assembly, homodimer. Requires Zn(2+) as cofactor.

The protein resides in the cytoplasm. Participates actively in the response to hyperosmotic and heat shock by preventing the aggregation of stress-denatured proteins and by disaggregating proteins, also in an autonomous, DnaK-independent fashion. Unfolded proteins bind initially to DnaJ; upon interaction with the DnaJ-bound protein, DnaK hydrolyzes its bound ATP, resulting in the formation of a stable complex. GrpE releases ADP from DnaK; ATP binding to DnaK triggers the release of the substrate protein, thus completing the reaction cycle. Several rounds of ATP-dependent interactions between DnaJ, DnaK and GrpE are required for fully efficient folding. Also involved, together with DnaK and GrpE, in the DNA replication of plasmids through activation of initiation proteins. The chain is Chaperone protein DnaJ from Tropheryma whipplei (strain Twist) (Whipple's bacillus).